The chain runs to 106 residues: Large ribosomal subunit protein eL42 (106 aa).

The tract at residues 34 to 53 (YAQGKRRYDRKQSGYGGQTK) is disordered.

This sequence belongs to the eukaryotic ribosomal protein eL42 family. As to quaternary structure, component of the large ribosomal subunit.

The protein resides in the cytoplasm. Its function is as follows. Component of the large ribosomal subunit. The ribosome is a large ribonucleoprotein complex responsible for the synthesis of proteins in the cell. The protein is Large ribosomal subunit protein eL42 (Rpl36a) of Canis lupus familiaris (Dog).